The sequence spans 152 residues: 6,7-dimethyl-8-ribityllumazine synthase (152 aa).

Residues Phe24, 56-58 (SFE), and 80-82 (VVV) each bind 5-amino-6-(D-ribitylamino)uracil. 85–86 (ET) lines the (2S)-2-hydroxy-3-oxobutyl phosphate pocket. The active-site Proton donor is the His88. Phe113 serves as a coordination point for 5-amino-6-(D-ribitylamino)uracil. A (2S)-2-hydroxy-3-oxobutyl phosphate-binding site is contributed by Arg127.

The protein belongs to the DMRL synthase family.

The catalysed reaction is (2S)-2-hydroxy-3-oxobutyl phosphate + 5-amino-6-(D-ribitylamino)uracil = 6,7-dimethyl-8-(1-D-ribityl)lumazine + phosphate + 2 H2O + H(+). The protein operates within cofactor biosynthesis; riboflavin biosynthesis; riboflavin from 2-hydroxy-3-oxobutyl phosphate and 5-amino-6-(D-ribitylamino)uracil: step 1/2. Functionally, catalyzes the formation of 6,7-dimethyl-8-ribityllumazine by condensation of 5-amino-6-(D-ribitylamino)uracil with 3,4-dihydroxy-2-butanone 4-phosphate. This is the penultimate step in the biosynthesis of riboflavin. The polypeptide is 6,7-dimethyl-8-ribityllumazine synthase (Thermococcus onnurineus (strain NA1)).